Consider the following 625-residue polypeptide: DNA-directed RNA polymerase subunit gamma (625 aa).

Zn(2+) is bound by residues Cys71, Cys73, Cys86, and Cys89. Residues Asp467, Asp469, and Asp471 each coordinate Mg(2+).

Belongs to the RNA polymerase beta' chain family. RpoC1 subfamily. In terms of assembly, in cyanobacteria the RNAP catalytic core is composed of 2 alpha, 1 beta, 1 beta', 1 gamma and 1 omega subunit. When a sigma factor is associated with the core the holoenzyme is formed, which can initiate transcription. It depends on Mg(2+) as a cofactor. Zn(2+) is required as a cofactor.

The catalysed reaction is RNA(n) + a ribonucleoside 5'-triphosphate = RNA(n+1) + diphosphate. Its function is as follows. DNA-dependent RNA polymerase catalyzes the transcription of DNA into RNA using the four ribonucleoside triphosphates as substrates. The polypeptide is DNA-directed RNA polymerase subunit gamma (Gloeothece citriformis (strain PCC 7424) (Cyanothece sp. (strain PCC 7424))).